The primary structure comprises 196 residues: Probable GTP-binding protein EngB (196 aa).

The EngB-type G domain occupies 24–196 (ELSEVALSGR…IWNLIEPYIS (173 aa)). Residues 32–39 (GRSNVGKS), 59–63 (GKTQT), 77–80 (DVPG), 144–147 (TKED), and 176–178 (YSS) each bind GTP. Mg(2+)-binding residues include S39 and T61.

It belongs to the TRAFAC class TrmE-Era-EngA-EngB-Septin-like GTPase superfamily. EngB GTPase family. Mg(2+) serves as cofactor.

Necessary for normal cell division and for the maintenance of normal septation. The sequence is that of Probable GTP-binding protein EngB from Staphylococcus aureus (strain Mu3 / ATCC 700698).